Reading from the N-terminus, the 111-residue chain is MGSRTLLGHLSVLAVVLLLLLQGTQSVDIKYQGYQVQLESVKKLKALEEQWVSSPRLQAQDPQPAVCHHPALPLDLQPICTSQEAASILQALRTMDNDECELCVNIACTGC.

Positions 1–26 are cleaved as a signal peptide; sequence MGSRTLLGHLSVLAVVLLLLLQGTQS. Residues 27–96 constitute a propeptide that is removed on maturation; it reads VDIKYQGYQV…SILQALRTMD (70 aa). Intrachain disulfides connect C67-C80, C100-C108, and C103-C111.

The protein belongs to the guanylin family.

The protein resides in the secreted. Functionally, endogenous activator of intestinal guanylate cyclase. It stimulates this enzyme through the same receptor binding region as the heat-stable enterotoxins. May be a potent physiological regulator of intestinal fluid and electrolyte transport. May be an autocrine/paracrine regulator of intestinal salt and water transport. The polypeptide is Guanylate cyclase activator 2B (GUCA2B) (Cavia porcellus (Guinea pig)).